Here is a 79-residue protein sequence, read N- to C-terminus: Conotoxin TxMEKL-021 (79 aa).

The signal sequence occupies residues 1-19; the sequence is MEKLTILLLVAVVLMSTQA. Positions 20-47 are excised as a propeptide; it reads LPQGGGEKRPRENIRFLSKRKSNAERWR. 3 cysteine pairs are disulfide-bonded: Cys51-Cys65, Cys58-Cys69, and Cys64-Cys75.

It belongs to the conotoxin O2 superfamily. Expressed by the venom duct.

The protein localises to the secreted. The sequence is that of Conotoxin TxMEKL-021 from Conus textile (Cloth-of-gold cone).